The following is a 302-amino-acid chain: Glutaminase (302 aa).

Residues Ser-61, Asn-111, Glu-155, Asn-162, Tyr-186, Tyr-238, and Val-256 each coordinate substrate.

Belongs to the glutaminase family. In terms of assembly, homotetramer.

The enzyme catalyses L-glutamine + H2O = L-glutamate + NH4(+). This Pseudomonas fluorescens (strain Pf0-1) protein is Glutaminase.